The primary structure comprises 644 residues: Ribonuclease R (644 aa).

The RNB domain maps to 211 to 529; that stretch reads RINYSHIPFI…LHRLLKELLF (319 aa). Residues 573–644 form the S1 motif domain; the sequence is LELLEKEFLG…ITERIKEHVS (72 aa).

This sequence belongs to the RNR ribonuclease family. RNase R subfamily.

The protein localises to the cytoplasm. It catalyses the reaction Exonucleolytic cleavage in the 3'- to 5'-direction to yield nucleoside 5'-phosphates.. In terms of biological role, 3'-5' exoribonuclease that releases 5'-nucleoside monophosphates and is involved in maturation of structured RNAs. This Helicobacter pylori (strain ATCC 700392 / 26695) (Campylobacter pylori) protein is Ribonuclease R.